The following is a 77-amino-acid chain: Probable Fe(2+)-trafficking protein (77 aa).

Belongs to the Fe(2+)-trafficking protein family.

Functionally, could be a mediator in iron transactions between iron acquisition and iron-requiring processes, such as synthesis and/or repair of Fe-S clusters in biosynthetic enzymes. The sequence is that of Probable Fe(2+)-trafficking protein from Baumannia cicadellinicola subsp. Homalodisca coagulata.